Reading from the N-terminus, the 412-residue chain is Translation initiation factor 2 subunit gamma (412 aa).

Positions 8–205 (QAEMNIGMVG…AMYEHFEPPE (198 aa)) constitute a tr-type G domain. Residues 17–24 (GHVDHGKT) are G1. Asp-20, Thr-24, Gly-45, and Ser-47 together coordinate Mg(2+). GTP is bound at residue 20–25 (DHGKTT). Residues 45-49 (GISIR) are G2. The Zn(2+) site is built by Cys-60, Cys-63, Cys-72, and Cys-75. Residues 89 to 92 (DSPG) are G3. Residues 145–148 (NKID) and 183–185 (SAQ) contribute to the GTP site. Residues 145-148 (NKID) form a G4 region. The tract at residues 183–185 (SAQ) is G5.

Belongs to the TRAFAC class translation factor GTPase superfamily. Classic translation factor GTPase family. EIF2G subfamily. As to quaternary structure, heterotrimer composed of an alpha, a beta and a gamma chain. It depends on Mg(2+) as a cofactor.

The catalysed reaction is GTP + H2O = GDP + phosphate + H(+). Its function is as follows. eIF-2 functions in the early steps of protein synthesis by forming a ternary complex with GTP and initiator tRNA. The polypeptide is Translation initiation factor 2 subunit gamma (Methanopyrus kandleri (strain AV19 / DSM 6324 / JCM 9639 / NBRC 100938)).